We begin with the raw amino-acid sequence, 529 residues long: Cytochrome P450 monooxygenase acuD (529 aa).

The helical transmembrane segment at 8 to 28 threads the bilayer; that stretch reads FAVIAASAAAVAGVLFLIYAA. A glycan (N-linked (GlcNAc...) asparagine) is linked at Asn81. Cys449 is a heme binding site.

Belongs to the cytochrome P450 family. The cofactor is heme.

The protein localises to the endoplasmic reticulum membrane. It catalyses the reaction 3-hydroxybenzyl alcohol + reduced [NADPH--hemoprotein reductase] + O2 = gentisyl alcohol + oxidized [NADPH--hemoprotein reductase] + H2O + H(+). It functions in the pathway secondary metabolite biosynthesis. In terms of biological role, cytochrome P450 monooxygenase; part of the gene cluster that mediates the biosynthesis of aculins. The pathway begins with the synthesis of 6-methylsalicylic acid by the polyketide synthase (PKS) acuA via condensation of acetate and malonate units. The 6-methylsalicylic acid decarboxylase acuB then catalyzes the decarboxylation of 6-methylsalicylic acid to yield m-cresol (also known as 3-methylphenol). These first reactions occur in the cytosol. The intermediate m-cresol is then transported into the endoplasmic reticulum where the cytochrome P450 monooxygenase acuC converts it to m-hydroxybenzyl alcohol, which is further converted to gentisyl alcohol by the cytochrome P450 monooxygenase acuD. Gentisyl alcohol is further oxidized by the oxidoreductase acuE that probably catalyzes hydroxylation of the aromatic ring. The aromatic system might then be opened by oxidation through a Baeyer-Villiger type of oxidation, which could be catalyzed by acuF, with the carboxylic acid at C-1 subsequently reduced to an aldehyde by acuG. Subsequently, a hemiacetal is formed, before the dehydrogenase acuH would reduce the double bond between C-4 and C-6. Finally, keto-enol tautomerism results in formation of aculinic acid, which exists as two diastereomers (both R/S configurations at C-1) by non-enzymatic hemiacetal formation. The carboxypeptidase acuI could be involved in the linking of aculinic acid to an aculene A moiety produced by the aculene biosynthesis cluster and which leads to the production of aculin A. AcuI may also be involved in the attachment of proline to aculinic acid to form epi-aculins A and B. The sequence is that of Cytochrome P450 monooxygenase acuD from Aspergillus aculeatus (strain ATCC 16872 / CBS 172.66 / WB 5094).